Here is a 137-residue protein sequence, read N- to C-terminus: MMQPKRTKFRKAHKGRIHGVASSGATLAFGQFGLKAMEPERITARQIEAARRALTRHMKRAGRVWIRVFPDLPVSKKPAEVRMGSGKGSPELWVARVKPGRVMFEIDGVNQQIAREALTLAAAKLPIKTRFVARIAE.

The protein belongs to the universal ribosomal protein uL16 family. Part of the 50S ribosomal subunit.

Functionally, binds 23S rRNA and is also seen to make contacts with the A and possibly P site tRNAs. In Rhodopseudomonas palustris (strain ATCC BAA-98 / CGA009), this protein is Large ribosomal subunit protein uL16.